The primary structure comprises 499 residues: Anaerobic magnesium-protoporphyrin IX monomethyl ester cyclase (499 aa).

Residues 9-145 (PHPAIGSRIP…AALENHNDLN (137 aa)) enclose the B12-binding domain. The 233-residue stretch at 188–420 (YGGKQAVVIQ…PPWRIFLWVK (233 aa)) folds into the Radical SAM core domain. [4Fe-4S] cluster contacts are provided by C202, C206, and C209.

Belongs to the BchE family. It depends on [4Fe-4S] cluster as a cofactor. The cofactor is adenosylcob(III)alamin.

The catalysed reaction is Mg-protoporphyrin IX 13-monomethyl ester + 3 S-adenosyl-L-methionine + H2O = 3,8-divinyl protochlorophyllide a + 3 5'-deoxyadenosine + 3 L-methionine + 4 H(+). The protein operates within porphyrin-containing compound metabolism; bacteriochlorophyll biosynthesis (light-independent). Functionally, involved in the tetrapyrrole biosynthetic pathways leading to chlorophyll and bacteriochlorophyll (BChl). Catalyzes the anaerobic formation of the isocyclic ring (E-ring) in Mg-protoporphyrin monomethyl ester (MPE) to yield protochlorophyllide a (PChlide a) via a six-electron oxidation and the formation of an oxo group at position C13 using oxygen from a water molecule. The sequence is that of Anaerobic magnesium-protoporphyrin IX monomethyl ester cyclase from Synechocystis sp. (strain ATCC 27184 / PCC 6803 / Kazusa).